The chain runs to 357 residues: tRNA-specific 2-thiouridylase MnmA (357 aa).

ATP contacts are provided by residues 6–13 (AMSGGVDS) and Leu-32. Cys-101 acts as the Nucleophile in catalysis. A disulfide bridge links Cys-101 with Cys-193. Gly-125 contacts ATP. The interaction with tRNA stretch occupies residues 143–145 (KDQ). The Cysteine persulfide intermediate role is filled by Cys-193.

It belongs to the MnmA/TRMU family.

It is found in the cytoplasm. It carries out the reaction S-sulfanyl-L-cysteinyl-[protein] + uridine(34) in tRNA + AH2 + ATP = 2-thiouridine(34) in tRNA + L-cysteinyl-[protein] + A + AMP + diphosphate + H(+). Functionally, catalyzes the 2-thiolation of uridine at the wobble position (U34) of tRNA, leading to the formation of s(2)U34. In Mycolicibacterium gilvum (strain PYR-GCK) (Mycobacterium gilvum (strain PYR-GCK)), this protein is tRNA-specific 2-thiouridylase MnmA.